The following is a 378-amino-acid chain: MNKGIVLLAAGGTGGHVFPAEALAHTLKARGYQVHLVTDSRAERYAGKFPADEIHVVPSATIGSKNPISVVRSLWKLWVGLRTARRLVTKLKPVAVVGFGGYPTVPPLLASTGLGVPSIIHEQNAVMGRANKALAARVKAIAGGFLPPANGQYSEKTVATGNPVRPAVLAASEIPYTPSQTGETFQLVVFGGSQGAQFFSSAVPAAICLMKDEQRKRIVVTQQARPEDKDSVIASYQKLGVKADVSPFFGDMASRIGEADLVISRSGASTVSELSVIGRPSILVPYPHALDHDQAANAAALSAAGGASVIKQAELSPQKLSSLLSSALAEPDRLSATAAAAKATGKPHAADVLADLVEAIAEGRSVQEFKKKNEGVGA.

UDP-N-acetyl-alpha-D-glucosamine is bound by residues 13-15, Asn124, Arg165, Ser193, and Gln294; that span reads TGG.

The protein belongs to the glycosyltransferase 28 family. MurG subfamily.

It is found in the cell inner membrane. The enzyme catalyses di-trans,octa-cis-undecaprenyl diphospho-N-acetyl-alpha-D-muramoyl-L-alanyl-D-glutamyl-meso-2,6-diaminopimeloyl-D-alanyl-D-alanine + UDP-N-acetyl-alpha-D-glucosamine = di-trans,octa-cis-undecaprenyl diphospho-[N-acetyl-alpha-D-glucosaminyl-(1-&gt;4)]-N-acetyl-alpha-D-muramoyl-L-alanyl-D-glutamyl-meso-2,6-diaminopimeloyl-D-alanyl-D-alanine + UDP + H(+). It functions in the pathway cell wall biogenesis; peptidoglycan biosynthesis. Its function is as follows. Cell wall formation. Catalyzes the transfer of a GlcNAc subunit on undecaprenyl-pyrophosphoryl-MurNAc-pentapeptide (lipid intermediate I) to form undecaprenyl-pyrophosphoryl-MurNAc-(pentapeptide)GlcNAc (lipid intermediate II). The sequence is that of UDP-N-acetylglucosamine--N-acetylmuramyl-(pentapeptide) pyrophosphoryl-undecaprenol N-acetylglucosamine transferase from Agrobacterium fabrum (strain C58 / ATCC 33970) (Agrobacterium tumefaciens (strain C58)).